Here is a 201-residue protein sequence, read N- to C-terminus: Glutathione peroxidase 1 (201 aa).

Serine 32 carries the post-translational modification Phosphoserine. Selenocysteine 47 is a catalytic residue. Position 47 (selenocysteine 47) is a non-standard amino acid, selenocysteine. Residues lysine 86, lysine 112, and lysine 146 each carry the N6-acetyllysine; alternate modification. Residues lysine 86, lysine 112, and lysine 146 each carry the N6-succinyllysine; alternate modification. Residues serine 195 and serine 199 each carry the phosphoserine modification.

The protein belongs to the glutathione peroxidase family. In terms of assembly, homotetramer. Interacts with MIEN1. Post-translationally, during periods of oxidative stress, Sec-47 may react with a superoxide radical, irreversibly lose hydroselenide and be converted to dehydroalanine.

The protein localises to the cytoplasm. The catalysed reaction is 2 glutathione + H2O2 = glutathione disulfide + 2 H2O. It catalyses the reaction (12S)-hydroperoxy-(5Z,8Z,10E,14Z)-eicosatetraenoate + 2 glutathione = (12S)-hydroxy-(5Z,8Z,10E,14Z)-eicosatetraenoate + glutathione disulfide + H2O. Protects the hemoglobin in erythrocytes from oxidative breakdown. In platelets, plays a crucial role of glutathione peroxidase in the arachidonic acid metabolism. This is Glutathione peroxidase 1 (GPX1) from Hylobates lar (Lar gibbon).